The sequence spans 31 residues: Phalloidin proprotein (31 aa).

A propeptide spanning residues Met1–Pro10 is cleaved from the precursor. A cross-link (cyclopeptide (Ala-Pro)) is located at residues Ala11–Pro17. The segment at residues Trp12–Cys16 is a cross-link (2'-cysteinyl-6'-hydroxytryptophan sulfoxide (Trp-Cys)). Residues Cys18–Glu31 constitute a propeptide that is removed on maturation.

It belongs to the MSDIN fungal toxin family. In terms of processing, processed by the macrocyclase-peptidase enzyme POPB to yield a toxic cyclic heptapeptide. POPB first removes 10 residues from the N-terminus. Conformational trapping of the remaining peptide forces the enzyme to release this intermediate rather than proceed to macrocyclization. The enzyme rebinds the remaining peptide in a different conformation and catalyzes macrocyclization of the N-terminal 7 residues.

Its function is as follows. Major toxin that belongs to the bicyclic heptapeptides called phallotoxins. Although structurally related to amatoxins, phallotoxins have a different mode of action, which is the stabilization of F-actin. Phallotoxins are poisonous when administered parenterally, but not orally because of poor absorption. The chain is Phalloidin proprotein from Amanita ocreata (Western North American destroying angel).